The following is a 190-amino-acid chain: Peptidyl-tRNA hydrolase (190 aa).

Residue F14 participates in tRNA binding. H19 serves as the catalytic Proton acceptor. 3 residues coordinate tRNA: M64, N66, and N112.

This sequence belongs to the PTH family. In terms of assembly, monomer.

It is found in the cytoplasm. The catalysed reaction is an N-acyl-L-alpha-aminoacyl-tRNA + H2O = an N-acyl-L-amino acid + a tRNA + H(+). Functionally, hydrolyzes ribosome-free peptidyl-tRNAs (with 1 or more amino acids incorporated), which drop off the ribosome during protein synthesis, or as a result of ribosome stalling. Catalyzes the release of premature peptidyl moieties from peptidyl-tRNA molecules trapped in stalled 50S ribosomal subunits, and thus maintains levels of free tRNAs and 50S ribosomes. The protein is Peptidyl-tRNA hydrolase of Staphylococcus haemolyticus (strain JCSC1435).